The sequence spans 412 residues: L-threonine:uridine-5'-aldehyde transaldolase (412 aa).

An N6-(pyridoxal phosphate)lysine modification is found at lysine 229.

It belongs to the SHMT family. Requires pyridoxal 5'-phosphate as cofactor.

It carries out the reaction uridine-5'-aldehyde + L-threonine = (5'S,6'S)-C-glycyluridine + acetaldehyde. It participates in antibiotic biosynthesis. Transaldolase involved in the biosynthesis of the capuramycin-type nucleoside antibiotic A-102395. Catalyzes the condensation of L-threonine and uridine-5'-aldehyde to form 5'-C-glycyluridine (GlyU). This is L-threonine:uridine-5'-aldehyde transaldolase from Amycolatopsis sp.